Here is a 228-residue protein sequence, read N- to C-terminus: Putative N-acetylmannosamine-6-phosphate 2-epimerase (228 aa).

This sequence belongs to the NanE family.

The enzyme catalyses an N-acyl-D-glucosamine 6-phosphate = an N-acyl-D-mannosamine 6-phosphate. Its pathway is amino-sugar metabolism; N-acetylneuraminate degradation; D-fructose 6-phosphate from N-acetylneuraminate: step 3/5. Its function is as follows. Converts N-acetylmannosamine-6-phosphate (ManNAc-6-P) to N-acetylglucosamine-6-phosphate (GlcNAc-6-P). In Pasteurella multocida (strain Pm70), this protein is Putative N-acetylmannosamine-6-phosphate 2-epimerase.